The primary structure comprises 85 residues: uncharacterized protein (85 aa).

The protein belongs to the YciI family.

This is an uncharacterized protein from Bacillus subtilis (strain 168).